A 75-amino-acid chain; its full sequence is Large ribosomal subunit protein bL28 (75 aa).

Belongs to the bacterial ribosomal protein bL28 family.

The chain is Large ribosomal subunit protein bL28 from Baumannia cicadellinicola subsp. Homalodisca coagulata.